Here is a 1472-residue protein sequence, read N- to C-terminus: Gag-Pol polyprotein (1472 aa).

Gly2 carries the N-myristoyl glycine; by host lipid modification. Residues 16 to 22 (FEKIRLR) carry the Nuclear export signal motif. Residues 26–32 (KKKYQIK) carry the Nuclear localization signal motif. 2 disordered regions span residues 115-135 (EKAAKKKNETTAPPGGESRNY) and 215-234 (DRTHRPPAGPLPAGQLRDPT). The residue at position 135 (Tyr135) is a Phosphotyrosine; by host. 2 CCHC-type zinc fingers span residues 390 to 407 (LKCFNCGKFGHMQRECKA) and 411 to 428 (IKCFKCGKIGHMAKDCKN). The interval 454–500 (HSWSGTNSPPNGNSLRSSKEAPPAVCREGTAPERGERTDKETEGERS) is disordered. Residues 456-469 (WSGTNSPPNGNSLR) are compositionally biased toward polar residues. A compositionally biased stretch (basic and acidic residues) spans 483–499 (TAPERGERTDKETEGER). A Peptidase A2 domain is found at 524 to 597 (VQALLDTGAD…TPINIIGRNI (74 aa)). Asp529 (for protease activity; shared with dimeric partner) is an active-site residue. Residues 653 to 843 (EGKLSRIGGE…PPWEWMGYKL (191 aa)) form the Reverse transcriptase domain. 3 residues coordinate Mg(2+): Asp719, Asp794, and Asp795. The tract at residues 836–844 (WEWMGYKLH) is RT 'primer grip'. Positions 1007–1023 (WDMWWQDYWQVSWIPEW) match the Tryptophan repeat motif motif. The RNase H type-1 domain maps to 1043 to 1166 (IKGEDVYYVD…IDKLVSKGIR (124 aa)). The Mg(2+) site is built by Asp1052, Glu1087, Asp1107, and Asp1158. Residues 1172 to 1213 (DRIEEAQDDHAKYHNNWRSMVQEFGLPNIVAKEIVAACPKCQ) form an Integrase-type zinc finger. 4 residues coordinate Zn(2+): His1181, His1185, Cys1209, and Cys1212. One can recognise an Integrase catalytic domain in the interval 1223-1373 (VDASIETWQM…SSAERLVNML (151 aa)). Residues Asp1233 and Asp1285 each contribute to the Mg(2+) site. A DNA-binding region (integrase-type) is located at residues 1392-1439 (FKVYYREGRDPVWKGPARLIWKGEGAVVIKEGEDIKVVPRRKAKIIKD). Residues 1440 to 1472 (YGERKTMDSEGSMEGVREANKQMEGDSDLQDQE) form a disordered region. Residues 1454–1463 (GVREANKQME) show a composition bias toward basic and acidic residues.

As to quaternary structure, homotrimer. Interacts with gp41 (via C-terminus). In terms of assembly, homodimer. The active site consists of two apposed aspartic acid residues. Heterodimer of p66 RT and p51 RT (RT p66/p51). Heterodimerization of RT is essential for DNA polymerase activity. Despite the sequence identities, p66 RT and p51 RT have distinct folding. As to quaternary structure, homotetramer; may further associate as a homohexadecamer. Requires Mg(2+) as cofactor. Post-translationally, specific enzymatic cleavages by the viral protease yield mature proteins. The protease is released by autocatalytic cleavage. The polyprotein is cleaved during and after budding, this process is termed maturation. Proteolytic cleavage of p66 RT removes the RNase H domain to yield the p51 RT subunit. In terms of processing, capsid protein p24 is phosphorylated.

It is found in the virion. Its subcellular location is the host nucleus. The protein localises to the host cytoplasm. It localises to the host cell membrane. It carries out the reaction Specific for a P1 residue that is hydrophobic, and P1' variable, but often Pro.. The enzyme catalyses Endohydrolysis of RNA in RNA/DNA hybrids. Three different cleavage modes: 1. sequence-specific internal cleavage of RNA. Human immunodeficiency virus type 1 and Moloney murine leukemia virus enzymes prefer to cleave the RNA strand one nucleotide away from the RNA-DNA junction. 2. RNA 5'-end directed cleavage 13-19 nucleotides from the RNA end. 3. DNA 3'-end directed cleavage 15-20 nucleotides away from the primer terminus.. The catalysed reaction is 3'-end directed exonucleolytic cleavage of viral RNA-DNA hybrid.. It catalyses the reaction DNA(n) + a 2'-deoxyribonucleoside 5'-triphosphate = DNA(n+1) + diphosphate. With respect to regulation, the viral protease is inhibited by many synthetic protease inhibitors (PIs), such as amprenavir, atazanavir, indinavir, loprinavir, nelfinavir, ritonavir and saquinavir. RT can be inhibited either by nucleoside RT inhibitors (NRTIs) or by non nucleoside RT inhibitors (NNRTIs). NRTIs act as chain terminators, whereas NNRTIs inhibit DNA polymerization by binding a small hydrophobic pocket near the RT active site and inducing an allosteric change in this region. Classical NRTIs are abacavir, adefovir (PMEA), didanosine (ddI), lamivudine (3TC), stavudine (d4T), tenofovir (PMPA), zalcitabine (ddC), and zidovudine (AZT). Classical NNRTIs are atevirdine (BHAP U-87201E), delavirdine, efavirenz (DMP-266), emivirine (I-EBU), and nevirapine (BI-RG-587). The tritherapies used as a basic effective treatment of AIDS associate two NRTIs and one NNRTI. Use of protease inhibitors in tritherapy regimens permit more ambitious therapeutic strategies. In terms of biological role, gag-Pol polyprotein and Gag polyprotein may regulate their own translation, by the binding genomic RNA in the 5'-UTR. At low concentration, Gag-Pol and Gag would promote translation, whereas at high concentration, the polyproteins encapsidate genomic RNA and then shut off translation. Matrix protein p17 has two main functions: in infected cell, it targets Gag and Gag-pol polyproteins to the plasma membrane via a multipartite membrane-binding signal, that includes its myristointegration complex. The myristoylation signal and the NLS exert conflicting influences its subcellular localization. The key regulation of these motifs might be phosphorylation of a portion of MA molecules on the C-terminal tyrosine at the time of virus maturation, by virion-associated cellular tyrosine kinase. Implicated in the release from host cell mediated by Vpu. Its function is as follows. Capsid protein p24 forms the conical core that encapsulates the genomic RNA-nucleocapsid complex in the virion. The core is constituted by capsid protein hexamer subunits. The core is disassembled soon after virion entry. Interaction with host PPIA/CYPA protects the virus from restriction by host TRIM5-alpha and from an unknown antiviral activity in host cells. This capsid restriction by TRIM5 is one of the factors which restricts SIV to the simian species. Functionally, nucleocapsid protein p7 encapsulates and protects viral dimeric unspliced (genomic) RNA. Binds these RNAs through its zinc fingers. Facilitates rearangement of nucleic acid secondary structure during retrotranscription of genomic RNA. This capability is referred to as nucleic acid chaperone activity. In terms of biological role, the aspartyl protease mediates proteolytic cleavages of Gag and Gag-Pol polyproteins during or shortly after the release of the virion from the plasma membrane. Cleavages take place as an ordered, step-wise cascade to yield mature proteins. This process is called maturation. Displays maximal activity during the budding process just prior to particle release from the cell. Also cleaves Nef and Vif, probably concomitantly with viral structural proteins on maturation of virus particles. Hydrolyzes host EIF4GI and PABP1 in order to shut off the capped cellular mRNA translation. The resulting inhibition of cellular protein synthesis serves to ensure maximal viral gene expression and to evade host immune response. Reverse transcriptase/ribonuclease H (RT) is a multifunctional enzyme that converts the viral dimeric RNA genome into dsDNA in the cytoplasm, shortly after virus entry into the cell. This enzyme displays a DNA polymerase activity that can copy either DNA or RNA templates, and a ribonuclease H (RNase H) activity that cleaves the RNA strand of RNA-DNA heteroduplexes in a partially processive 3' to 5' endonucleasic mode. Conversion of viral genomic RNA into dsDNA requires many steps. A tRNA binds to the primer-binding site (PBS) situated at the 5'-end of the viral RNA. RT uses the 3' end of the tRNA primer to perform a short round of RNA-dependent minus-strand DNA synthesis. The reading proceeds through the U5 region and ends after the repeated (R) region which is present at both ends of viral RNA. The portion of the RNA-DNA heteroduplex is digested by the RNase H, resulting in a ssDNA product attached to the tRNA primer. This ssDNA/tRNA hybridizes with the identical R region situated at the 3' end of viral RNA. This template exchange, known as minus-strand DNA strong stop transfer, can be either intra- or intermolecular. RT uses the 3' end of this newly synthesized short ssDNA to perform the RNA-dependent minus-strand DNA synthesis of the whole template. RNase H digests the RNA template except for two polypurine tracts (PPTs) situated at the 5'-end and near the center of the genome. It is not clear if both polymerase and RNase H activities are simultaneous. RNase H can probably proceed both in a polymerase-dependent (RNA cut into small fragments by the same RT performing DNA synthesis) and a polymerase-independent mode (cleavage of remaining RNA fragments by free RTs). Secondly, RT performs DNA-directed plus-strand DNA synthesis using the PPTs that have not been removed by RNase H as primers. PPTs and tRNA primers are then removed by RNase H. The 3' and 5' ssDNA PBS regions hybridize to form a circular dsDNA intermediate. Strand displacement synthesis by RT to the PBS and PPT ends produces a blunt ended, linear dsDNA copy of the viral genome that includes long terminal repeats (LTRs) at both ends. Its function is as follows. Integrase catalyzes viral DNA integration into the host chromosome, by performing a series of DNA cutting and joining reactions. This enzyme activity takes place after virion entry into a cell and reverse transcription of the RNA genome in dsDNA. The first step in the integration process is 3' processing. This step requires a complex comprising the viral genome, matrix protein, Vpr and integrase. This complex is called the pre-integration complex (PIC). The integrase protein removes 2 nucleotides from each 3' end of the viral DNA, leaving recessed CA OH's at the 3' ends. In the second step, the PIC enters cell nucleus. This process is mediated through integrase and Vpr proteins, and allows the virus to infect a non dividing cell. This ability to enter the nucleus is specific of lentiviruses, other retroviruses cannot and rely on cell division to access cell chromosomes. In the third step, termed strand transfer, the integrase protein joins the previously processed 3' ends to the 5' ends of strands of target cellular DNA at the site of integration. The 5'-ends are produced by integrase-catalyzed staggered cuts, 5 bp apart. A Y-shaped, gapped, recombination intermediate results, with the 5'-ends of the viral DNA strands and the 3' ends of target DNA strands remaining unjoined, flanking a gap of 5 bp. The last step is viral DNA integration into host chromosome. This involves host DNA repair synthesis in which the 5 bp gaps between the unjoined strands are filled in and then ligated. Since this process occurs at both cuts flanking the SIV genome, a 5 bp duplication of host DNA is produced at the ends of SIV integration. Alternatively, Integrase may catalyze the excision of viral DNA just after strand transfer, this is termed disintegration. This Simian immunodeficiency virus agm.grivet (isolate AGM gr-1) (SIV-agm.gri) protein is Gag-Pol polyprotein (gag-pol).